A 136-amino-acid chain; its full sequence is Nucleoside diphosphate kinase (136 aa).

ATP-binding residues include Lys10, Phe58, Arg86, Thr92, Arg104, and Asn114. The active-site Pros-phosphohistidine intermediate is His117.

The protein belongs to the NDK family. As to quaternary structure, homotetramer. Mg(2+) serves as cofactor.

The protein resides in the cytoplasm. It carries out the reaction a 2'-deoxyribonucleoside 5'-diphosphate + ATP = a 2'-deoxyribonucleoside 5'-triphosphate + ADP. The catalysed reaction is a ribonucleoside 5'-diphosphate + ATP = a ribonucleoside 5'-triphosphate + ADP. Its function is as follows. Major role in the synthesis of nucleoside triphosphates other than ATP. The ATP gamma phosphate is transferred to the NDP beta phosphate via a ping-pong mechanism, using a phosphorylated active-site intermediate. The chain is Nucleoside diphosphate kinase from Mycobacterium marinum (strain ATCC BAA-535 / M).